The following is a 148-amino-acid chain: RxLR effector protein SFI7 (148 aa).

A signal peptide spans 1–22 (MRAYFVLLVAATAILTYGGATA). A glycan (N-linked (GlcNAc...) asparagine) is linked at N32. Residues 44-58 (RSLRVAPSGGNGEER) carry the RxLR-dEER motif.

Belongs to the RxLR effector family.

It localises to the secreted. The protein localises to the host cytoplasm. Its subcellular location is the host cell membrane. Effector that suppresses flg22-induced post-translational MAP kinase activation in tomato but not in Arabidopsis. The perception of highly conserved pathogen- or microbe-associated molecular patterns (PAMPs/MAMPs), such as flg22, triggers converging signaling pathways recruiting MAP kinase cascades and inducing transcriptional re-programming, yielding a generic antimicrobial response. Also partially attenuates INF1-triggered cell death. The sequence is that of RxLR effector protein SFI7 from Phytophthora infestans (strain T30-4) (Potato late blight agent).